Consider the following 590-residue polypeptide: Protein I'm not dead yet (590 aa).

11 consecutive transmembrane segments (helical) span residues 43–63 (GLVVFLVPLLCLPVMLLNEGA), 82–102 (ALPLYVTSMIPIVAFPIMGIM), 115–135 (TLVMFMGGIMVALAVEYCNLH), 153–173 (LHFGLIMVTMFLSMWISNAAC), 224–244 (LCYYLGIAYASSLGGCGTIIG), 270–290 (TFMFYSVPSMLVYTLLTFVFL), 329–349 (LGPMSIHEIQVMILFIFMVVM), 373–393 (SMPTIFVVVMCFMLPANYAFL), 457–477 (VLPNSVLLLVVILVAVFLTAF), 509–529 (AGLACSMAFHLPVSTPPNALV), and 540–560 (MAIAGIGPTIITIITLFVFCQ).

This sequence belongs to the SLC13A/DASS transporter (TC 2.A.47) family. NADC subfamily. As to expression, in adults, abundantly expressed in the fat body, basolateral region of midgut cells and oenocytes. Low level expression is seen in the halteres, procardia, restricted regions of the esophagus and hindgut, base of the legs and in a subset of cells in the third segment of the antennae.

The protein localises to the basolateral cell membrane. Cation-independent electroneutral transporter (not associated with membrane depolarization) of a variety of tricarboxylic and dicarboxylic acid-cycle intermediates. There is also small, but detectable, transport of monocarboxylics. Transport is through the epithelium of the gut and across the plasma membranes of organs involved in intermediary metabolism and storage. Affinity for substrates is citrate &gt; succinate &gt; pyruvate. Fumarate, a-ketoglutarate, and glutarate are also transported, but not lactate. Transport mechanism that is not coupled to Na(+), K(+), or Cl(-). Function is shown in Xenopus oocytes and human retinal pigment epithelial (HRPE) cell lines. The sequence is that of Protein I'm not dead yet (Indy) from Drosophila melanogaster (Fruit fly).